The primary structure comprises 323 residues: Elongation factor P--(R)-beta-lysine ligase (323 aa).

74–76 (SPE) contributes to the substrate binding site. Residues 98-100 (RNE) and Asn107 each bind ATP. Residue Tyr116 participates in substrate binding. Residue 242-243 (EL) participates in ATP binding. Glu249 serves as a coordination point for substrate. ATP is bound at residue Gly298.

Belongs to the class-II aminoacyl-tRNA synthetase family. EpmA subfamily. As to quaternary structure, homodimer.

The catalysed reaction is D-beta-lysine + L-lysyl-[protein] + ATP = N(6)-((3R)-3,6-diaminohexanoyl)-L-lysyl-[protein] + AMP + diphosphate + H(+). With EpmB is involved in the beta-lysylation step of the post-translational modification of translation elongation factor P (EF-P). Catalyzes the ATP-dependent activation of (R)-beta-lysine produced by EpmB, forming a lysyl-adenylate, from which the beta-lysyl moiety is then transferred to the epsilon-amino group of a conserved specific lysine residue in EF-P. The protein is Elongation factor P--(R)-beta-lysine ligase of Vibrio atlanticus (strain LGP32) (Vibrio splendidus (strain Mel32)).